Reading from the N-terminus, the 266-residue chain is Energy-coupling factor transporter transmembrane protein EcfT (266 aa).

The next 7 helical transmembrane spans lie at 26–46 (VIAT…RSVT), 47–67 (LAGL…HYIL), 69–89 (GIKP…LSTP), 116–136 (LIWL…IALT), 151–171 (LPVH…PTLI), 192–212 (SLVA…LSAF), and 246–266 (YAVT…KKAL).

It belongs to the energy-coupling factor EcfT family. Forms a stable energy-coupling factor (ECF) transporter complex composed of 2 membrane-embedded substrate-binding proteins (S component), 2 ATP-binding proteins (A component) and 2 transmembrane proteins (T component). May be able to interact with more than 1 S component at a time.

It is found in the cell membrane. In terms of biological role, transmembrane (T) component of an energy-coupling factor (ECF) ABC-transporter complex. Unlike classic ABC transporters this ECF transporter provides the energy necessary to transport a number of different substrates. This chain is Energy-coupling factor transporter transmembrane protein EcfT, found in Heliobacterium modesticaldum (strain ATCC 51547 / Ice1).